A 362-amino-acid polypeptide reads, in one-letter code: Molybdopterin synthase catalytic subunit (362 aa).

Residues H101 to R102, K117, and K124 to E126 each bind substrate.

Belongs to the MoaE family. MOCS2B subfamily. In terms of assembly, heterotetramer; composed of 2 small (Mocs2A) and 2 large (Mocs2B) subunits.

Its subcellular location is the cytoplasm. The enzyme catalyses 2 [molybdopterin-synthase sulfur-carrier protein]-C-terminal-Gly-aminoethanethioate + cyclic pyranopterin phosphate + H2O = molybdopterin + 2 [molybdopterin-synthase sulfur-carrier protein]-C-terminal Gly-Gly + 2 H(+). Its pathway is cofactor biosynthesis; molybdopterin biosynthesis. In terms of biological role, catalytic subunit of the molybdopterin synthase complex, a complex that catalyzes the conversion of precursor Z into molybdopterin. Acts by mediating the incorporation of 2 sulfur atoms from thiocarboxylated Mocs2A into precursor Z to generate a dithiolene group. In Drosophila grimshawi (Hawaiian fruit fly), this protein is Molybdopterin synthase catalytic subunit.